We begin with the raw amino-acid sequence, 82 residues long: U24 protein (82 aa).

The short motif at 7-10 is the PPXY motif element; the sequence is PPSY. The chain crosses the membrane as a helical span at residues 52 to 72; that stretch reads FIILACLIISVILCLILILHI.

As to quaternary structure, interacts with host ITCH; this interaction probably mediates ITCH degradation. Interacts probably with NEDD4.

The protein resides in the membrane. Down-regulates of the TCR/CD3E complex and the transferrin receptor TFRC in host T-cells by blocking them from recycling back to the cell surface. This is U24 protein from Homo sapiens (Human).